The chain runs to 659 residues: Putative cysteine-rich receptor-like protein kinase 39 (659 aa).

The N-terminal stretch at 1–27 (MGKYSVLMIFIASSLLIVLQNVEIVNA) is a signal peptide. Gnk2-homologous domains lie at 28 to 134 (VGCT…NHST) and 142 to 253 (PSVR…LYAF). Residues 28–289 (VGCTGSFFNG…KKKGRSIGYG (262 aa)) lie on the Extracellular side of the membrane. N-linked (GlcNAc...) asparagine glycans are attached at residues Asn-38, Asn-64, Asn-122, Asn-131, Asn-157, Asn-170, Asn-259, and Asn-274. The helical transmembrane segment at 290–310 (GIIAIVVVLTFINILVFIGYI) threads the bilayer. Residues 311 to 659 (KVYGRRKESY…DDVFTELSCR (349 aa)) are Cytoplasmic-facing. The 267-residue stretch at 353-619 (FSSENTLGQG…PTMSSVIIWL (267 aa)) folds into the Protein kinase domain. ATP contacts are provided by residues 359-367 (LGQGGFGTV) and Lys-381. The residue at position 426 (Tyr-426) is a Phosphotyrosine. Asp-478 functions as the Proton acceptor in the catalytic mechanism. Ser-482 carries the phosphoserine modification. A Phosphothreonine modification is found at Thr-518. Phosphotyrosine is present on Tyr-526.

Belongs to the protein kinase superfamily. Ser/Thr protein kinase family. CRK subfamily.

It is found in the membrane. It catalyses the reaction L-seryl-[protein] + ATP = O-phospho-L-seryl-[protein] + ADP + H(+). It carries out the reaction L-threonyl-[protein] + ATP = O-phospho-L-threonyl-[protein] + ADP + H(+). The chain is Putative cysteine-rich receptor-like protein kinase 39 (CRK39) from Arabidopsis thaliana (Mouse-ear cress).